Consider the following 56-residue polypeptide: Large ribosomal subunit protein bL32 (56 aa).

A compositionally biased stretch (basic residues) spans 1–16 (MAVQKSKKSRSRRDMR). The interval 1 to 56 (MAVQKSKKSRSRRDMRRSHDAIDGPTLSVDSTTGETHRRHHVTADGYYKGRKVVNK) is disordered.

It belongs to the bacterial ribosomal protein bL32 family.

The sequence is that of Large ribosomal subunit protein bL32 from Idiomarina loihiensis (strain ATCC BAA-735 / DSM 15497 / L2-TR).